A 999-amino-acid chain; its full sequence is Hypoxia up-regulated protein 1 (999 aa).

Residues 1–32 (MAATVRRQRPRRLLCWALVAVLLADLLALSDT) form the signal peptide. Residues asparagine 155, asparagine 222, and asparagine 515 are each glycosylated (N-linked (GlcNAc...) asparagine). The residue at position 567 (serine 567) is a Phosphoserine. Positions 567–694 (SPEEESTLTK…KKPKPARKQK (128 aa)) are disordered. The segment covering 574 to 583 (LTKLGNTISS) has biased composition (polar residues). N-linked (GlcNAc...) asparagine glycosylation is present at asparagine 596. Basic and acidic residues-rich tracts occupy residues 611–626 (GSKD…KEEA) and 641–668 (PKGD…KPNE). Positions 669–680 (KGQAGPEGAAPA) are enriched in low complexity. N-linked (GlcNAc...) asparagine glycans are attached at residues asparagine 830, asparagine 862, and asparagine 869. N6-acetyllysine is present on lysine 883. The tract at residues 909–999 (AKFTKPRPRP…QKRPSKNDEL (91 aa)) is disordered. N-linked (GlcNAc...) asparagine glycosylation is found at asparagine 922 and asparagine 931. The segment covering 949 to 962 (EEAKPILEPDKEET) has biased composition (basic and acidic residues). The Prevents secretion from ER signature appears at 996–999 (NDEL).

Belongs to the heat shock protein 70 family. In terms of assembly, part of a large chaperone multiprotein complex comprising DNAJB11, HSP90B1, HSPA5, HYOU, PDIA2, PDIA4, PDIA6, PPIB, SDF2L1, UGGT1 and very small amounts of ERP29, but not, or at very low levels, CALR nor CANX.

The protein localises to the endoplasmic reticulum lumen. Its function is as follows. Has a pivotal role in cytoprotective cellular mechanisms triggered by oxygen deprivation. Promotes HSPA5/BiP-mediated ATP nucleotide exchange and thereby activates the unfolded protein response (UPR) pathway in the presence of endoplasmic reticulum stress. May play a role as a molecular chaperone and participate in protein folding. The chain is Hypoxia up-regulated protein 1 (Hyou1) from Mus musculus (Mouse).